The primary structure comprises 62 residues: uncharacterized protein (62 aa).

Positions 1-18 are enriched in polar residues; the sequence is MTTNRVDPLEQTSPNTPT. Positions 1 to 24 are disordered; it reads MTTNRVDPLEQTSPNTPTSKREKA.

This is an uncharacterized protein from Rickettsia conorii (strain ATCC VR-613 / Malish 7).